The following is a 148-amino-acid chain: Snaclec 2 (148 aa).

Positions 1 to 23 are cleaved as a signal peptide; sequence MGRFIFVSFGLLVVFLSLSGTEA. 3 cysteine pairs are disulfide-bonded: Cys-27–Cys-38, Cys-55–Cys-144, and Cys-121–Cys-136. The 112-residue stretch at 34-145 folds into the C-type lectin domain; it reads YDQNCYKAFE…CSGTHSFVCK (112 aa).

It belongs to the snaclec family. In terms of assembly, heterodimer; disulfide-linked. As to expression, expressed by the venom gland.

Its subcellular location is the secreted. Its function is as follows. Interferes with one step of hemostasis (modulation of platelet aggregation, or coagulation cascade, for example). In Echis ocellatus (Ocellated saw-scaled viper), this protein is Snaclec 2.